The sequence spans 130 residues: MATPAKKTGSKKSKRNVPNGVVHIQSTFNNTIVSITDTNGEVVSWSSAGASGFKGARKGTPFAAQTAAEAAARRALEQGMRQIEVLVRGPGSGRETAIRALQVAGLEITLIRDVTPLPHNGCRRPKRRRV.

It belongs to the universal ribosomal protein uS11 family. In terms of assembly, part of the 30S ribosomal subunit. Interacts with proteins S7 and S18. Binds to IF-3.

In terms of biological role, located on the platform of the 30S subunit, it bridges several disparate RNA helices of the 16S rRNA. Forms part of the Shine-Dalgarno cleft in the 70S ribosome. This chain is Small ribosomal subunit protein uS11, found in Prochlorococcus marinus (strain MIT 9211).